The primary structure comprises 201 residues: Ribosome maturation factor RimP (201 aa).

Belongs to the RimP family.

Its subcellular location is the cytoplasm. Its function is as follows. Required for maturation of 30S ribosomal subunits. In Rhizobium johnstonii (strain DSM 114642 / LMG 32736 / 3841) (Rhizobium leguminosarum bv. viciae), this protein is Ribosome maturation factor RimP.